Consider the following 207-residue polypeptide: Holliday junction branch migration complex subunit RuvA (207 aa).

The interval M1–N64 is domain I. Residues T65–P143 form a domain II region. A flexible linker region spans residues A144 to T158. The interval S159–I207 is domain III.

Belongs to the RuvA family. In terms of assembly, homotetramer. Forms an RuvA(8)-RuvB(12)-Holliday junction (HJ) complex. HJ DNA is sandwiched between 2 RuvA tetramers; dsDNA enters through RuvA and exits via RuvB. An RuvB hexamer assembles on each DNA strand where it exits the tetramer. Each RuvB hexamer is contacted by two RuvA subunits (via domain III) on 2 adjacent RuvB subunits; this complex drives branch migration. In the full resolvosome a probable DNA-RuvA(4)-RuvB(12)-RuvC(2) complex forms which resolves the HJ.

The protein resides in the cytoplasm. Functionally, the RuvA-RuvB-RuvC complex processes Holliday junction (HJ) DNA during genetic recombination and DNA repair, while the RuvA-RuvB complex plays an important role in the rescue of blocked DNA replication forks via replication fork reversal (RFR). RuvA specifically binds to HJ cruciform DNA, conferring on it an open structure. The RuvB hexamer acts as an ATP-dependent pump, pulling dsDNA into and through the RuvAB complex. HJ branch migration allows RuvC to scan DNA until it finds its consensus sequence, where it cleaves and resolves the cruciform DNA. The sequence is that of Holliday junction branch migration complex subunit RuvA from Aliivibrio fischeri (strain ATCC 700601 / ES114) (Vibrio fischeri).